Here is a 186-residue protein sequence, read N- to C-terminus: Adenine phosphoribosyltransferase (186 aa).

Belongs to the purine/pyrimidine phosphoribosyltransferase family. Homodimer.

It localises to the cytoplasm. The catalysed reaction is AMP + diphosphate = 5-phospho-alpha-D-ribose 1-diphosphate + adenine. It functions in the pathway purine metabolism; AMP biosynthesis via salvage pathway; AMP from adenine: step 1/1. Its function is as follows. Catalyzes a salvage reaction resulting in the formation of AMP, that is energically less costly than de novo synthesis. This is Adenine phosphoribosyltransferase from Xanthomonas euvesicatoria pv. vesicatoria (strain 85-10) (Xanthomonas campestris pv. vesicatoria).